Here is a 344-residue protein sequence, read N- to C-terminus: Uroporphyrinogen decarboxylase (344 aa).

Substrate contacts are provided by residues 26–30 (RQAGR), Phe45, Asp75, Tyr151, Ser206, and His320.

It belongs to the uroporphyrinogen decarboxylase family. Homodimer.

It is found in the cytoplasm. The catalysed reaction is uroporphyrinogen III + 4 H(+) = coproporphyrinogen III + 4 CO2. Its pathway is porphyrin-containing compound metabolism; protoporphyrin-IX biosynthesis; coproporphyrinogen-III from 5-aminolevulinate: step 4/4. Functionally, catalyzes the decarboxylation of four acetate groups of uroporphyrinogen-III to yield coproporphyrinogen-III. In Staphylococcus epidermidis (strain ATCC 35984 / DSM 28319 / BCRC 17069 / CCUG 31568 / BM 3577 / RP62A), this protein is Uroporphyrinogen decarboxylase.